A 104-amino-acid chain; its full sequence is Large ribosomal subunit protein uL24 (104 aa).

This sequence belongs to the universal ribosomal protein uL24 family. Part of the 50S ribosomal subunit.

Its function is as follows. One of two assembly initiator proteins, it binds directly to the 5'-end of the 23S rRNA, where it nucleates assembly of the 50S subunit. One of the proteins that surrounds the polypeptide exit tunnel on the outside of the subunit. The chain is Large ribosomal subunit protein uL24 from Pseudomonas savastanoi pv. phaseolicola (strain 1448A / Race 6) (Pseudomonas syringae pv. phaseolicola (strain 1448A / Race 6)).